The sequence spans 152 residues: Ninjurin-1 (152 aa).

Met1 carries the N-acetylmethionine modification. A disordered region spans residues 1–26 (MDSGTEEYELNGGLPPGTPGSPDASP). The Extracellular portion of the chain corresponds to 1–78 (MDSGTEEYEL…EQGPSFAFYV (78 aa)). Phosphoserine occurs at positions 21 and 25. The interval 26–37 (PARWGWRHGPIN) is N-terminal adhesion motif. Positions 40-69 (HYASKKSAAESMLDIALLMANASQLKAVVE) are required to induce plasma membrane rupture. The segment at 44-55 (KKSAAESMLDIA) is helix alpha1. The segment at 58 to 74 (MANASQLKAVVEQGPSF) is helix alpha2. N-linked (GlcNAc...) asparagine glycosylation is present at Asn60. The chain crosses the membrane as a helical span at residues 79–103 (PLVVLISISLVLQIGVGVLLIFLVK). Over 104 to 113 (YDLNNPAKHA) the chain is Cytoplasmic. A helical transmembrane segment spans residues 114-138 (KLDFLNNLATGLVFIIVVVNIFITA). At 139–152 (FGVQKPLMDMAPQQ) the chain is on the extracellular side.

This sequence belongs to the ninjurin family. In terms of assembly, homodimer; in absence of death stimuli, forms an inactive homodimer. Homooligomer; in response to death stimuli, homooligomerizes into long, highly branched filaments and large, ring-shaped structures in the membrane. Cleaved by MMP9 protease to generate the Secreted ninjurin-1 form. Post-translationally, N-linked glycosylation is required for homooligomerization. As to expression, widely expressed in both adult and embryonic tissues, primarily those of epithelial origin.

Its subcellular location is the cell membrane. The protein localises to the synaptic cell membrane. It is found in the secreted. In response to death stimuli, homooligomerizes and disrupts membrane integrity by introducing the hydrophilic faces of alpha1 and alpha2 helices into the hydrophobic membrane. Homooligomerization and ability to mediate plasma membrane rupture is inhibited by glycine; it is unclear whether glycine directly or indirectly inhibits homooligomerization. In normal conditions, NINJ1 is autoinhibited via formation of a homodimer: in the inactive homodimer, the alpha1 and alpha2 helices (residues 44-74) form a single transmembrane region without a kink, in which hydrophilic faces of alpha1 and alpha2 helices are sequestered. Functionally, effector of various programmed cell death, such as pyroptosis and necroptosis, which mediates plasma membrane rupture (cytolysis). Oligomerizes in response to death stimuli and forms ring-like structures on the plasma membrane: acts by cutting and shedding membrane disks, like a cookie cutter, leading to membrane damage and loss that cannot be repaired by the cell. Plasma membrane rupture leads to release intracellular molecules named damage-associated molecular patterns (DAMPs) that propagate the inflammatory response. Mechanistically, mediates plasma membrane rupture by introducing hydrophilic faces of 2 alpha helices into the hydrophobic membrane. Induces plasma membrane rupture downstream of Gasdermin (GSDMA, GSDMB, GSDMC, GSDMD, or GSDME) or MLKL during pyroptosis or necroptosis, respectively. Acts as an effector of PANoptosis downstream of CASP1, CASP4, CASP8 and RIPK3. Also induces plasma membrane rupture in response to cell swelling caused by osmotic stress and ferroptosis downstream of lipid peroxidation. Acts as a regulator of Toll-like receptor 4 (TLR4) signaling triggered by lipopolysaccharide (LPS) during systemic inflammation; directly binds LPS. Involved in leukocyte migration during inflammation by promoting transendothelial migration of macrophages via homotypic binding. Promotes the migration of monocytes across the brain endothelium to central nervous system inflammatory lesions. Also acts as a homophilic transmembrane adhesion molecule involved in various processes such as axonal growth, cell chemotaxis and angiogenesis. Promotes cell adhesion by mediating homophilic interactions via its extracellular N-terminal adhesion motif (N-NAM). Involved in the progression of the inflammatory stress by promoting cell-to-cell interactions between immune cells and endothelial cells. Plays a role in nerve regeneration by promoting maturation of Schwann cells. Acts as a regulator of angiogenesis. Promotes the formation of new vessels by mediating the interaction between capillary pericyte cells and endothelial cells. Promotes osteoclasts development by enhancing the survival of prefusion osteoclasts. Also involved in striated muscle growth and differentiation. In terms of biological role, secreted form generated by cleavage, which has chemotactic activity. Acts as an anti-inflammatory mediator by promoting monocyte recruitment, thereby ameliorating atherosclerosis. The polypeptide is Ninjurin-1 (Homo sapiens (Human)).